Here is a 500-residue protein sequence, read N- to C-terminus: Autophagy-related protein 18 (500 aa).

The WD 1 repeat unit spans residues 3-41 (DSSPTINFINFNQTGTCISLGTSKGFKIFNCEPFGKFYS). The tract at residues 174-197 (VGGNTETSFKRDQQDAGHSDISDL) is disordered. Positions 181–194 (SFKRDQQDAGHSDI) are enriched in basic and acidic residues. WD repeat units lie at residues 243–283 (AHKG…KIYQ) and 288–327 (TYAT…SNNK). A L/FRRG motif motif is present at residues 284 to 288 (FRRGT). Positions 328-358 (LDSDDSNMEEAAADDSSLDTTSIDALSDEEN) are disordered. Positions 331 to 344 (DDSNMEEAAADDSS) are enriched in acidic residues. Ser354 carries the phosphoserine modification.

It belongs to the WD repeat PROPPIN family. In terms of assembly, component of the PI(3,5)P2 regulatory complex, composed of ATG18, FIG4, FAB1, VAC14 and VAC7. VAC14 nucleates the assembly of the complex and serves as a scaffold. Interacts with ATG2, ATG9 and VAC17. The ATG2-ATG18 complex is essential for autophagosome formation.

The protein resides in the preautophagosomal structure membrane. It is found in the vacuole membrane. Its subcellular location is the endosome membrane. Functionally, the PI(3,5)P2 regulatory complex regulates both the synthesis and turnover of phosphatidylinositol 3,5-bisphosphate (PtdIns(3,5)P2). May negatively regulate FAB1 activity by sequestering or masking VAC7 from FAB1. Necessary for proper vacuole morphology. Plays an important role in osmotically-induced vacuole fragmentation. Required for cytoplasm to vacuole transport (Cvt) vesicle formation, pexophagy and starvation-induced autophagy. Involved in correct ATG9 trafficking to the pre-autophagosomal structure. Might also be involved in premeiotic DNA replication. With ATG2, protects ATG8 from ARG4-mediated cleavage. This Saccharomyces cerevisiae (strain YJM789) (Baker's yeast) protein is Autophagy-related protein 18 (ATG18).